Here is a 468-residue protein sequence, read N- to C-terminus: MGTVCESVATAKSSTAVMSSIPPFLSKTYDMVDDPLTDDVVSWSSGNNSFVVWNVPEFAKQFLPKYFKHNNFSSFVRQLNTYGFRKVDPDRWEFANEGFLRGQKQILKSIVRRKPAQVQPPQQPQVQHSSVGACVEVGKFGLEEEVERLQRDKNVLMQELVRLRQQQQVTEHHLQNVGQKVHVMEQRQQQMMSFLAKAVQSPGFLNQFSQQSNEANQHISESNKKRRLPVEDQMNSGSHGVNGLSRQIVRYQSSMNDATNTMLQQIQQMSNAPSHESLSSNNGSFLLGDVPNSNISDNGSSSNGSPEVTLADVSSIPAGFYPAMKYHEPCETNQVMETNLPFSQGDLLPPTQGAAASGSSSSDLVGCETDNGECLDPIMAVLDGALELEADTLNELLPEVQDSFWEQFIGESPVIGETDELISGSVENELILEQLELQSTLSNVWSKNQQMNHLTEQMGLLTSDALRK.

A DNA-binding region spans residues 21–115 (IPPFLSKTYD…ILKSIVRRKP (95 aa)). The tract at residues 133–199 (ACVEVGKFGL…QMMSFLAKAV (67 aa)) is hydrophobic repeat HR-A/B. Residues 211–220 (QSNEANQHIS) are compositionally biased toward polar residues. Disordered stretches follow at residues 211–244 (QSNE…VNGL) and 268–309 (QMSN…PEVT). A Nuclear localization signal motif is present at residues 223–227 (NKKRR). Residues 277–305 (SLSSNNGSFLLGDVPNSNISDNGSSSNGS) are compositionally biased toward low complexity. Residues 402 to 411 (DSFWEQFIGE) carry the AHA motif. A Nuclear export signal motif is present at residues 454–461 (LTEQMGLL).

Belongs to the HSF family. Class A subfamily. As to quaternary structure, homotrimer. Post-translationally, exhibits temperature-dependent phosphorylation.

It localises to the cytoplasm. The protein localises to the nucleus. Its function is as follows. Transcriptional activator that specifically binds DNA sequence 5'-AGAAnnTTCT-3' known as heat shock promoter elements (HSE). The chain is Heat stress transcription factor A-1e (HSFA1E) from Arabidopsis thaliana (Mouse-ear cress).